A 665-amino-acid polypeptide reads, in one-letter code: Long chain acyl-CoA synthetase 2 (665 aa).

228 to 239 (IMYTSGTTGEPK) contributes to the ATP binding site. The fatty acid-binding stretch occupies residues 496–520 (DGWFHTGDIGEWQEDGSMKIIDRKK).

This sequence belongs to the ATP-dependent AMP-binding enzyme family. Mg(2+) serves as cofactor. Expressed along the entire length of the stem, but expression was not entirely epidermal specific, with some expression found in internal cell layers as well. Was expressed in leave epidermal cells, flowers (sepals, petals, stamens, filaments and carpel), siliques and developing seeds. In roots, expression was detected in an internal cell layer, probably the endodermal layer.

Its subcellular location is the endoplasmic reticulum. It catalyses the reaction a long-chain fatty acid + ATP + CoA = a long-chain fatty acyl-CoA + AMP + diphosphate. The protein operates within lipid metabolism; fatty acid metabolism. Its function is as follows. Activation of long-chain fatty acids for both synthesis of cellular lipids, and degradation via beta-oxidation. Acts in the cutin pathway. Preferentially uses palmitate, palmitoleate, oleate and linoleate. Required for repression of lateral root formation through its role in cutin biosynthesis and subsequent aerial tissues permeability. This chain is Long chain acyl-CoA synthetase 2 (LACS2), found in Arabidopsis thaliana (Mouse-ear cress).